The following is a 103-amino-acid chain: Large ribosomal subunit protein bL32m (103 aa).

A mitochondrion-targeting transit peptide spans 1–47 (MALLRGNSLAISQKMLSVFQASALPHISLRIFISPPSIANIWNSILL). The Zn(2+) site is built by Cys77, Cys80, Cys90, and Cys93.

This sequence belongs to the bacterial ribosomal protein bL32 family. Component of the mitochondrial large ribosomal subunit (mt-LSU). Mature yeast 74S mitochondrial ribosomes consist of a small (37S) and a large (54S) subunit. The 37S small subunit contains a 15S ribosomal RNA (15S mt-rRNA) and at least 32 different proteins. The 54S large subunit contains a 21S rRNA (21S mt-rRNA) and at least 45 different proteins. bL32m has a zinc binding site. In terms of processing, MRPL32 precursor is processed by the m-AAA protease, which cleaves the N-terminal transit peptide. Cleavage by the m-AAA protease takes place prior to assembly into the large subunit, an essential step for mitochondrial ribosome (mitoribosome) assembly. Proper processing by the m-AAA protease is dependent on the zinc-binding region within the tightly folded C-terminal domain of MRPL32: zinc-dependent folding halts degradation initiated from the N-terminus and triggers the release of mature mrpl32.

The protein localises to the mitochondrion. Functionally, component of the mitochondrial ribosome (mitoribosome), a dedicated translation machinery responsible for the synthesis of mitochondrial genome-encoded proteins, including at least some of the essential transmembrane subunits of the mitochondrial respiratory chain. The mitoribosomes are attached to the mitochondrial inner membrane and translation products are cotranslationally integrated into the membrane. The polypeptide is Large ribosomal subunit protein bL32m (mrpl32) (Schizosaccharomyces pombe (strain 972 / ATCC 24843) (Fission yeast)).